Reading from the N-terminus, the 355-residue chain is Probable dual-specificity RNA methyltransferase RlmN (355 aa).

The interval 1-20 (MSATPVTQLTPSSQPQQPCS) is disordered. The active-site Proton acceptor is the Glu107. Positions 113-341 (TDKRLTVCVS…VSVRYSRGLE (229 aa)) constitute a Radical SAM core domain. Cys120 and Cys346 are disulfide-bonded. Residues Cys127, Cys131, and Cys134 each contribute to the [4Fe-4S] cluster site. Residues 174–175 (GE), Ser204, 227–229 (SLH), and Asn303 contribute to the S-adenosyl-L-methionine site. Cys346 (S-methylcysteine intermediate) is an active-site residue.

This sequence belongs to the radical SAM superfamily. RlmN family. [4Fe-4S] cluster serves as cofactor.

The protein localises to the cytoplasm. The enzyme catalyses adenosine(2503) in 23S rRNA + 2 reduced [2Fe-2S]-[ferredoxin] + 2 S-adenosyl-L-methionine = 2-methyladenosine(2503) in 23S rRNA + 5'-deoxyadenosine + L-methionine + 2 oxidized [2Fe-2S]-[ferredoxin] + S-adenosyl-L-homocysteine. It catalyses the reaction adenosine(37) in tRNA + 2 reduced [2Fe-2S]-[ferredoxin] + 2 S-adenosyl-L-methionine = 2-methyladenosine(37) in tRNA + 5'-deoxyadenosine + L-methionine + 2 oxidized [2Fe-2S]-[ferredoxin] + S-adenosyl-L-homocysteine. Specifically methylates position 2 of adenine 2503 in 23S rRNA and position 2 of adenine 37 in tRNAs. In Nostoc sp. (strain PCC 7120 / SAG 25.82 / UTEX 2576), this protein is Probable dual-specificity RNA methyltransferase RlmN.